A 160-amino-acid polypeptide reads, in one-letter code: Eukaryotic translation initiation factor 5A (160 aa).

Residues 1-12 (MSDEEHHFESKA) are compositionally biased toward basic and acidic residues. Positions 1 to 21 (MSDEEHHFESKADAGASKTFP) are disordered. The residue at position 52 (Lys52) is a Hypusine.

Belongs to the eIF-5A family. Post-translationally, lys-53 undergoes hypusination, a unique post-translational modification that consists in the addition of a butylamino group from spermidine to lysine side chain, leading to the formation of the unusual amino acid hypusine. eIF-5As are the only known proteins to undergo this modification, which is essential for their function.

Functionally, translation factor that promotes translation elongation and termination, particularly upon ribosome stalling at specific amino acid sequence contexts. Binds between the exit (E) and peptidyl (P) site of the ribosome and promotes rescue of stalled ribosome: specifically required for efficient translation of polyproline-containing peptides as well as other motifs that stall the ribosome. Acts as a ribosome quality control (RQC) cofactor by joining the RQC complex to facilitate peptidyl transfer during CAT tailing step. In Manihot esculenta (Cassava), this protein is Eukaryotic translation initiation factor 5A.